We begin with the raw amino-acid sequence, 115 residues long: Aspartate 1-decarboxylase (115 aa).

Ser25 (schiff-base intermediate with substrate; via pyruvic acid) is an active-site residue. Ser25 carries the pyruvic acid (Ser) modification. Thr57 lines the substrate pocket. Catalysis depends on Tyr58, which acts as the Proton donor. Residue 71-73 (GAA) participates in substrate binding.

Belongs to the PanD family. In terms of assembly, heterooctamer of four alpha and four beta subunits. It depends on pyruvate as a cofactor. In terms of processing, is synthesized initially as an inactive proenzyme, which is activated by self-cleavage at a specific serine bond to produce a beta-subunit with a hydroxyl group at its C-terminus and an alpha-subunit with a pyruvoyl group at its N-terminus.

It is found in the cytoplasm. The enzyme catalyses L-aspartate + H(+) = beta-alanine + CO2. Its pathway is cofactor biosynthesis; (R)-pantothenate biosynthesis; beta-alanine from L-aspartate: step 1/1. Its function is as follows. Catalyzes the pyruvoyl-dependent decarboxylation of aspartate to produce beta-alanine. This chain is Aspartate 1-decarboxylase, found in Campylobacter curvus (strain 525.92).